We begin with the raw amino-acid sequence, 591 residues long: Aspartate--tRNA(Asp/Asn) ligase (591 aa).

Glu-174 contributes to the L-aspartate binding site. The interval 198-201 (QLFK) is aspartate. Arg-220 lines the L-aspartate pocket. ATP-binding positions include 220 to 222 (RDE) and Gln-229. His-450 contributes to the L-aspartate binding site. Residue Glu-483 coordinates ATP. Arg-490 serves as a coordination point for L-aspartate. 535-538 (GLDR) lines the ATP pocket.

It belongs to the class-II aminoacyl-tRNA synthetase family. Type 1 subfamily. Homodimer.

It is found in the cytoplasm. The catalysed reaction is tRNA(Asx) + L-aspartate + ATP = L-aspartyl-tRNA(Asx) + AMP + diphosphate. Its function is as follows. Aspartyl-tRNA synthetase with relaxed tRNA specificity since it is able to aspartylate not only its cognate tRNA(Asp) but also tRNA(Asn). Reaction proceeds in two steps: L-aspartate is first activated by ATP to form Asp-AMP and then transferred to the acceptor end of tRNA(Asp/Asn). This chain is Aspartate--tRNA(Asp/Asn) ligase, found in Pseudomonas fluorescens (strain ATCC BAA-477 / NRRL B-23932 / Pf-5).